We begin with the raw amino-acid sequence, 362 residues long: Cobalt-precorrin-5B C(1)-methyltransferase (362 aa).

Belongs to the CbiD family.

The enzyme catalyses Co-precorrin-5B + S-adenosyl-L-methionine = Co-precorrin-6A + S-adenosyl-L-homocysteine. It participates in cofactor biosynthesis; adenosylcobalamin biosynthesis; cob(II)yrinate a,c-diamide from sirohydrochlorin (anaerobic route): step 6/10. Catalyzes the methylation of C-1 in cobalt-precorrin-5B to form cobalt-precorrin-6A. The chain is Cobalt-precorrin-5B C(1)-methyltransferase from Burkholderia cenocepacia (strain HI2424).